A 153-amino-acid polypeptide reads, in one-letter code: Interleukin-4 (153 aa).

The first 24 residues, 1-24 (MGLTSQLLPPLFFLLACAGNFAHG), serve as a signal peptide directing secretion. Disulfide bonds link cysteine 27-cysteine 151, cysteine 48-cysteine 89, and cysteine 70-cysteine 123. Asparagine 62 carries N-linked (GlcNAc...) asparagine glycosylation. Asparagine 129 carries N-linked (GlcNAc...) asparagine glycosylation.

It belongs to the IL-4/IL-13 family.

The protein localises to the secreted. In terms of biological role, participates in at least several B-cell activation processes as well as of other cell types. It is a costimulator of DNA-synthesis. It induces the expression of class II MHC molecules on resting B-cells. It enhances both secretion and cell surface expression of IgE and IgG1. It also regulates the expression of the low affinity Fc receptor for IgE (CD23) on both lymphocytes and monocytes. Positively regulates IL31RA expression in macrophages. Stimulates autophagy in dendritic cells by interfering with mTORC1 signaling and through the induction of RUFY4. This is Interleukin-4 (IL4) from Macaca mulatta (Rhesus macaque).